Consider the following 505-residue polypeptide: E3 SUMO-protein ligase PIAS4-A (505 aa).

Positions 12 to 46 constitute an SAP domain; the sequence is VKSFRVSDLQTLLASMGRSKSGLKQDLVGRALRLV. Positions 20–24 match the LXXLL motif motif; that stretch reads LQTLL. A Glycyl lysine isopeptide (Lys-Gly) (interchain with G-Cter in SUMO); alternate cross-link involves residue K35. K35 is covalently cross-linked (Glycyl lysine isopeptide (Lys-Gly) (interchain with G-Cter in SUMO2); alternate). Residues K56 and K68 each participate in a glycyl lysine isopeptide (Lys-Gly) (interchain with G-Cter in SUMO2) cross-link. Residues 104–264 enclose the PINIT domain; it reads GIPKPAPPPA…SVAVYLVRVF (161 aa). The SP-RING-type zinc-finger motif lies at 296–381; that stretch reads PESEIATTGL…LKETPEDVEE (86 aa). Zn(2+)-binding residues include C327, H329, C350, and C353. The interval 374–505 is required for nuclear localization; the sequence is ETPEDVEEIE…DYDKDLVTAY (132 aa). A compositionally biased stretch (basic and acidic residues) spans 395 to 407; the sequence is DDKEKERERENSR. A disordered region spans residues 395-505; the sequence is DDKEKERERE…DYDKDLVTAY (111 aa). Residues 437 to 457 are compositionally biased toward gly residues; it reads SGSGGASAGTGSTSGGSGGGT. Acidic residues predominate over residues 462–485; that stretch reads TLDDSSEEEGGGGAEDSEETDDSQ. Positions 493–505 are enriched in basic and acidic residues; sequence GRYDYDKDLVTAY.

This sequence belongs to the PIAS family. Post-translationally, sumoylated. Lys-35 is the main site of sumoylation. As to expression, highly expressed in spleen, liver, and brain. Expressed at lower levels in heart, intestine, kidney, gill, skin, and muscle.

The protein localises to the nucleus. It carries out the reaction S-ubiquitinyl-[E2 ubiquitin-conjugating enzyme]-L-cysteine + [acceptor protein]-L-lysine = [E2 ubiquitin-conjugating enzyme]-L-cysteine + N(6)-ubiquitinyl-[acceptor protein]-L-lysine.. It functions in the pathway protein modification; protein sumoylation. Functions as an E3-type small ubiquitin-like modifier (SUMO) ligase. May play a role as a transcriptional coregulator in various cellular pathways. Catalyzes conjugation of SUMO2 to KAT5 in response to DNA damage, facilitating repair of DNA double-strand breaks (DSBs) via homologous recombination (HR). Mediates sumoylation of PARP1 in response to PARP1 trapping to chromatin. Negatively regulates induction of interferon phi 1 (ifnphi1) mediated by mavs and ticam1/trif. Also inhibits ifnphi1-mediated activation of the interferon-stimulated genes (ISGs) pkz and cd40, and to a lesser extent rsad2 and isg15. May inhibit ticam1/trif-mediated activation of NF-kappa-B. The polypeptide is E3 SUMO-protein ligase PIAS4-A (Danio rerio (Zebrafish)).